A 50-amino-acid polypeptide reads, in one-letter code: Photosystem I reaction center subunit IX (50 aa).

The helical transmembrane segment at 7–27 (YLSTAPVLAILCCSFLAGLVI) threads the bilayer.

It belongs to the PsaJ family.

It is found in the plastid. The protein localises to the chloroplast thylakoid membrane. In terms of biological role, may help in the organization of the PsaE and PsaF subunits. This chain is Photosystem I reaction center subunit IX, found in Pinus koraiensis (Korean pine).